The following is a 123-amino-acid chain: Small ribosomal subunit protein uS13 (123 aa).

Residues 99–113 (RGQRTHTNARTRKGG) show a composition bias toward basic residues. The disordered stretch occupies residues 99-123 (RGQRTHTNARTRKGGSRLAVAAKKK).

It belongs to the universal ribosomal protein uS13 family. Part of the 30S ribosomal subunit. Forms a loose heterodimer with protein S19. Forms two bridges to the 50S subunit in the 70S ribosome.

Functionally, located at the top of the head of the 30S subunit, it contacts several helices of the 16S rRNA. In the 70S ribosome it contacts the 23S rRNA (bridge B1a) and protein L5 of the 50S subunit (bridge B1b), connecting the 2 subunits; these bridges are implicated in subunit movement. Contacts the tRNAs in the A and P-sites. The chain is Small ribosomal subunit protein uS13 from Anaplasma phagocytophilum (strain HZ).